The primary structure comprises 232 residues: C4-dicarboxylate TRAP transporter small permease protein DctQ (232 aa).

The next 4 membrane-spanning stretches (helical) occupy residues 30-50, 58-78, 103-123, and 167-187; these read EFLI…NVIM, ILWA…VGAS, LYAL…LIGS, and FIPY…FLQI.

Belongs to the TRAP transporter small permease family. In terms of assembly, the complex comprises the extracytoplasmic solute receptor protein DctP, and the two transmembrane proteins DctQ and DctM.

It is found in the cell inner membrane. In terms of biological role, part of the tripartite ATP-independent periplasmic (TRAP) transport system DctPQM involved in C4-dicarboxylates uptake. This is C4-dicarboxylate TRAP transporter small permease protein DctQ from Vibrio cholerae serotype O1 (strain ATCC 39315 / El Tor Inaba N16961).